A 305-amino-acid polypeptide reads, in one-letter code: MDLSGVKKKSLLGVKENNKKSSTRAPSPTKRKDRSDEKSKDRSKDKGATKESSEKDRGRDKTRKRRSASSGSSSTRSRSSSTSSSGSSTSTGSSSGSSSSSASSRSGSSSTSRSSSSSSSSGSPSPSRRRHDNRRRSRSKSKPPKRDEKERKRRSPSPKPTKVHIGRLTRNVTKDHIMEIFSTYGKIKMIDMPVERMHPHLSKGYAYVEFENPDEAEKALKHMDGGQIDGQEITATAVLAPWPRPPPRRFSPPRRMLPPLPMWRRSPPRMRRRSRSPRRRSPARRRSRSPGRRRHRSRSSSNSSR.

Residues 1-10 (MDLSGVKKKS) are compositionally biased toward basic residues. A necessary for interaction with SRP54, nuclear localization and exon-skipping region spans residues 1–161 (MDLSGVKKKS…KRRSPSPKPT (161 aa)). Positions 1-170 (MDLSGVKKKS…TKVHIGRLTR (170 aa)) are disordered. Positions 1–220 (MDLSGVKKKS…ENPDEAEKAL (220 aa)) are necessary for interaction with the cleaved p110 isoform of CDC2L1. Residues Lys-7 and Lys-15 each participate in a glycyl lysine isopeptide (Lys-Gly) (interchain with G-Cter in SUMO2) cross-link. The span at 33-59 (DRSDEKSKDRSKDKGATKESSEKDRGR) shows a compositional bias: basic and acidic residues. At Ser-53 the chain carries Phosphoserine. Residues 68-126 (ASSGSSSTRSRSSSTSSSGSSTSTGSSSGSSSSSASSRSGSSSTSRSSSSSSSSGSPSP) show a composition bias toward low complexity. A necessary for interactions with UPF2 and UPF3B and UPF2-dependent NMD region spans residues 69–121 (SSGSSSTRSRSSSTSSSGSSTSTGSSSGSSSSSASSRSGSSSTSRSSSSSSSS). Basic residues-rich tracts occupy residues 127–143 (SRRR…KSKP) and 151–167 (RKRR…HIGR). A phosphoserine mark is found at Ser-155 and Ser-157. The necessary for interaction with PNN and exon-skipping stretch occupies residues 156–242 (PSPKPTKVHI…ITATAVLAPW (87 aa)). The interaction with SAP18 and ACIN1 stretch occupies residues 159-244 (KPTKVHIGRL…ATAVLAPWPR (86 aa)). Residue Thr-161 is modified to Phosphothreonine. In terms of domain architecture, RRM spans 161-240 (TKVHIGRLTR…QEITATAVLA (80 aa)). An N6-acetyllysine modification is found at Lys-218. A necessary for interaction with TRA2B, nuclear localization and exon-skipping region spans residues 238-305 (VLAPWPRPPP…RSRSSSNSSR (68 aa)). The interval 240–305 (APWPRPPPRR…RSRSSSNSSR (66 aa)) is disordered. The segment covering 242-261 (WPRPPPRRFSPPRRMLPPLP) has biased composition (pro residues). Residues 266-298 (SPPRMRRRSRSPRRRSPARRRSRSPGRRRHRSR) are compositionally biased toward basic residues.

The protein belongs to the splicing factor SR family. Found in mRNA splicing-dependent exon junction complexes (EJC). Found in a post-splicing complex with NXF1, RBM8A, UPF1, UPF2, UPF3A, UPF3B and RNPS1. Component of the heterotrimeric ASAP (apoptosis- and splicing-associated protein) and PSAP complexes consisting of RNPS1, SAP18 and either ACIN1 or PNN, respectively; the ASAP and PSAP complexes probably are formed mutually exclusive. Component of the active spliceosome. Associates with polysomes. Interacts with the cleaved p110 isoform of CDC2L1, CSNK2A1, PNN, SART3, SRP54, SRRM1 and TRA2B/SFRS10. Post-translationally, phosphorylated on one or more of the four Ser/Thr residues (Ser-43, Thr-49, Ser-52 or Ser-53). Ser-53 phosphorylation site is important for splicing and translation stimulation activity in vitro.

The protein localises to the nucleus. It localises to the nucleus speckle. The protein resides in the cytoplasm. Part of pre- and post-splicing multiprotein mRNP complexes. Auxiliary component of the splicing-dependent multiprotein exon junction complex (EJC) deposited at splice junction on mRNAs. The EJC is a dynamic structure consisting of core proteins and several peripheral nuclear and cytoplasmic associated factors that join the complex only transiently either during EJC assembly or during subsequent mRNA metabolism. Component of the ASAP and PSAP complexes which bind RNA in a sequence-independent manner and are proposed to be recruited to the EJC prior to or during the splicing process and to regulate specific excision of introns in specific transcription subsets. The ASAP complex can inhibit RNA processing during in vitro splicing reactions. The ASAP complex promotes apoptosis and is disassembled after induction of apoptosis. Enhances the formation of the ATP-dependent A complex of the spliceosome. Involved in both constitutive splicing and, in association with SRP54 and TRA2B/SFRS10, in distinctive modulation of alternative splicing in a substrate-dependent manner. Involved in the splicing modulation of BCL2L1/Bcl-X (and probably other apoptotic genes); specifically inhibits formation of proapoptotic isoforms such as Bcl-X(S); the activity is different from the established EJC assembly and function. Participates in mRNA 3'-end cleavage. Involved in UPF2-dependent nonsense-mediated decay (NMD) of mRNAs containing premature stop codons. Also mediates increase of mRNA abundance and translational efficiency. Binds spliced mRNA 20-25 nt upstream of exon-exon junctions. This is RNA-binding protein with serine-rich domain 1 (RNPS1) from Bos taurus (Bovine).